Here is a 536-residue protein sequence, read N- to C-terminus: Multicopper oxidase CueO (536 aa).

Residues 1-28 (MLRRDFLKYSVALGVASALPLWSRAAFA) constitute a signal peptide (tat-type signal). Plastocyanin-like domains lie at 53–165 (KAGQ…IEDD), 229–295 (GWLR…AFDL), and 424–536 (FHNA…GFTV). His-101, His-103, His-141, and His-143 together coordinate Cu cation. His-463, His-466, His-468, His-519, Cys-520, His-521, and His-525 together coordinate Cu cation.

Belongs to the multicopper oxidase family. Monomer. Cu cation serves as cofactor. Post-translationally, predicted to be exported by the Tat system. The position of the signal peptide cleavage has not been experimentally proven.

The protein localises to the periplasm. It catalyses the reaction 4 Cu(+) + O2 + 4 H(+) = 4 Cu(2+) + 2 H2O. In terms of biological role, multicopper oxidase involved in copper homeostasis and copper tolerance under both aerobic and anaerobic conditions. Is responsible for the oxidation of Cu(+) to the less harmful Cu(2+) in the periplasm, thereby preventing Cu(+) from entering the cytoplasm. The polypeptide is Multicopper oxidase CueO (cueO) (Salmonella typhimurium (strain LT2 / SGSC1412 / ATCC 700720)).